A 605-amino-acid polypeptide reads, in one-letter code: Alpha-1,3-galactosidase B (605 aa).

The first 19 residues, 1-19 (MKRIIFNFCFVWLAVSAFA), serve as a signal peptide directing secretion. 3 PbH1 repeats span residues 428–450 (CPEV…LFST), 451–473 (PLKT…LLCG), and 484–538 (CRNV…VIED).

Belongs to the glycosyl hydrolase 110 family. B subfamily.

It carries out the reaction Hydrolysis of terminal, non-reducing branched (1-&gt;3)-alpha-D-galactosidic residues, producing free D-galactose.. The catalysed reaction is Hydrolysis of terminal, non-reducing linear (1-&gt;3)-alpha-D-galactosidic residues, producing free D-galactose.. It catalyses the reaction Hydrolysis of terminal, non-reducing alpha-D-galactose residues in alpha-D-galactosides, including galactose oligosaccharides, galactomannans and galactolipids.. In terms of biological role, alpha-galactosidase. Removes both branched alpha-1,3-linked galactose residues of blood group B antigens and linear alpha-1,3-linked galactose structures. The polypeptide is Alpha-1,3-galactosidase B (glaB2) (Phocaeicola vulgatus (strain ATCC 8482 / DSM 1447 / JCM 5826 / CCUG 4940 / NBRC 14291 / NCTC 11154) (Bacteroides vulgatus)).